The chain runs to 142 residues: Large ribosomal subunit protein uL13 (142 aa).

This sequence belongs to the universal ribosomal protein uL13 family. As to quaternary structure, part of the 50S ribosomal subunit.

Functionally, this protein is one of the early assembly proteins of the 50S ribosomal subunit, although it is not seen to bind rRNA by itself. It is important during the early stages of 50S assembly. The sequence is that of Large ribosomal subunit protein uL13 from Shewanella baltica (strain OS185).